The sequence spans 129 residues: Small ribosomal subunit protein uS11 (129 aa).

The protein belongs to the universal ribosomal protein uS11 family. In terms of assembly, part of the 30S ribosomal subunit. Interacts with proteins S7 and S18. Binds to IF-3.

In terms of biological role, located on the platform of the 30S subunit, it bridges several disparate RNA helices of the 16S rRNA. Forms part of the Shine-Dalgarno cleft in the 70S ribosome. The sequence is that of Small ribosomal subunit protein uS11 from Psychrobacter arcticus (strain DSM 17307 / VKM B-2377 / 273-4).